Reading from the N-terminus, the 273-residue chain is Aspartate/glutamate leucyltransferase (273 aa).

Belongs to the R-transferase family. Bpt subfamily.

It is found in the cytoplasm. It carries out the reaction N-terminal L-glutamyl-[protein] + L-leucyl-tRNA(Leu) = N-terminal L-leucyl-L-glutamyl-[protein] + tRNA(Leu) + H(+). The catalysed reaction is N-terminal L-aspartyl-[protein] + L-leucyl-tRNA(Leu) = N-terminal L-leucyl-L-aspartyl-[protein] + tRNA(Leu) + H(+). In terms of biological role, functions in the N-end rule pathway of protein degradation where it conjugates Leu from its aminoacyl-tRNA to the N-termini of proteins containing an N-terminal aspartate or glutamate. The chain is Aspartate/glutamate leucyltransferase from Ruegeria pomeroyi (strain ATCC 700808 / DSM 15171 / DSS-3) (Silicibacter pomeroyi).